The primary structure comprises 525 residues: GMP synthase [glutamine-hydrolyzing] (525 aa).

The 199-residue stretch at Arg-9–Leu-207 folds into the Glutamine amidotransferase type-1 domain. Cys-86 (nucleophile) is an active-site residue. Active-site residues include His-181 and Glu-183. Positions Trp-208–Arg-400 constitute a GMPS ATP-PPase domain. Ser-235 to Ser-241 lines the ATP pocket.

Homodimer.

It catalyses the reaction XMP + L-glutamine + ATP + H2O = GMP + L-glutamate + AMP + diphosphate + 2 H(+). It participates in purine metabolism; GMP biosynthesis; GMP from XMP (L-Gln route): step 1/1. Its function is as follows. Catalyzes the synthesis of GMP from XMP. This chain is GMP synthase [glutamine-hydrolyzing], found in Shigella boydii serotype 18 (strain CDC 3083-94 / BS512).